Reading from the N-terminus, the 764-residue chain is Probable glutamate--tRNA ligase, cytoplasmic (764 aa).

An L-glutamate-binding site is contributed by 228–230; it reads RFP. The 'HIGH' region signature appears at 233-242; it reads PSGYMHIGHC. An ATP-binding site is contributed by His238. L-glutamate is bound by residues Asp264, 404–408, and Arg422; that span reads YDFAC. Residues Glu425 and 460-464 contribute to the ATP site; that span reads LLSKR. Residues 460–464 carry the 'KMSKS' region motif; sequence LLSKR.

It belongs to the class-I aminoacyl-tRNA synthetase family. Glutamate--tRNA ligase type 2 subfamily.

Its subcellular location is the cytoplasm. It carries out the reaction tRNA(Glu) + L-glutamate + ATP = L-glutamyl-tRNA(Glu) + AMP + diphosphate. Catalyzes the attachment of glutamate to tRNA(Glu) in a two-step reaction: glutamate is first activated by ATP to form Glu-AMP and then transferred to the acceptor end of tRNA(Glu). The sequence is that of Probable glutamate--tRNA ligase, cytoplasmic (gluS) from Dictyostelium discoideum (Social amoeba).